The sequence spans 247 residues: 3-deoxy-manno-octulosonate cytidylyltransferase (247 aa).

The protein belongs to the KdsB family.

The protein localises to the cytoplasm. The enzyme catalyses 3-deoxy-alpha-D-manno-oct-2-ulosonate + CTP = CMP-3-deoxy-beta-D-manno-octulosonate + diphosphate. Its pathway is nucleotide-sugar biosynthesis; CMP-3-deoxy-D-manno-octulosonate biosynthesis; CMP-3-deoxy-D-manno-octulosonate from 3-deoxy-D-manno-octulosonate and CTP: step 1/1. The protein operates within bacterial outer membrane biogenesis; lipopolysaccharide biosynthesis. Its function is as follows. Activates KDO (a required 8-carbon sugar) for incorporation into bacterial lipopolysaccharide in Gram-negative bacteria. This is 3-deoxy-manno-octulosonate cytidylyltransferase from Chlorobium phaeobacteroides (strain DSM 266 / SMG 266 / 2430).